Here is a 435-residue protein sequence, read N- to C-terminus: MSKKLHVVSLGCTKNLVDTEVMLARLPEYEITQIPEEADLIIVNTCGFIGPAKEESLQTVFDLHSRRKKDSTLVMAGCLSERYKEELQKEMPEVDIFTGVGDYAKIDELISQKKSSFSDQVYLIRSEERIITGSNYHAYIKLSEGCNQQCSFCAIPSFKGKLQSRPIEDIVQEIKNLVAKGYKDFTFVSQDSSSYLRDFGIQESLVDLIHAVEEIEGIMSARILYLYPSTTTPKMIDAIANSPVFVNYFEMPIQHISDSLLKKMKRGIGAQKTKELLYAMRAVPESFLRTSLIVGHPGESEEDFHELVEFLEDFEFDRINLFAYSDEEGTKAYEMEEKIPQEVIEERLAILDAIVKKQQMKSLEKDLGKTVECYLDGTSEESELLLSGRKKIWAPEVDGEILINDSEIDNLQIGNLYKVHINERLGDKLVGTVRA.

Residues 3 to 115 (KKLHVVSLGC…IDELISQKKS (113 aa)) enclose the MTTase N-terminal domain. 6 residues coordinate [4Fe-4S] cluster: Cys12, Cys46, Cys78, Cys146, Cys150, and Cys153. The Radical SAM core domain occupies 132–361 (TGSNYHAYIK…DAIVKKQQMK (230 aa)).

The protein belongs to the methylthiotransferase family. RimO subfamily. [4Fe-4S] cluster is required as a cofactor.

The protein resides in the cytoplasm. The catalysed reaction is L-aspartate(89)-[ribosomal protein uS12]-hydrogen + (sulfur carrier)-SH + AH2 + 2 S-adenosyl-L-methionine = 3-methylsulfanyl-L-aspartate(89)-[ribosomal protein uS12]-hydrogen + (sulfur carrier)-H + 5'-deoxyadenosine + L-methionine + A + S-adenosyl-L-homocysteine + 2 H(+). Functionally, catalyzes the methylthiolation of an aspartic acid residue of ribosomal protein uS12. The protein is Ribosomal protein uS12 methylthiotransferase RimO of Nitratiruptor sp. (strain SB155-2).